The sequence spans 274 residues: Glutamate--cysteine ligase regulatory subunit (274 aa).

At S59 the chain carries Phosphoserine. K263 bears the N6-acetyllysine mark.

Belongs to the aldo/keto reductase family. Glutamate--cysteine ligase light chain subfamily. Heterodimer of a catalytic heavy chain and a regulatory light chain. In terms of tissue distribution, most abundant in kidney. Also found in liver and testis.

It participates in sulfur metabolism; glutathione biosynthesis; glutathione from L-cysteine and L-glutamate: step 1/2. The protein is Glutamate--cysteine ligase regulatory subunit (Gclm) of Rattus norvegicus (Rat).